The sequence spans 194 residues: FMN-dependent NADH:quinone oxidoreductase (194 aa).

Residues serine 9, 15–17, and 85–88 contribute to the FMN site; these read SIS and MYNF.

It belongs to the azoreductase type 1 family. In terms of assembly, homodimer. FMN is required as a cofactor.

It carries out the reaction 2 a quinone + NADH + H(+) = 2 a 1,4-benzosemiquinone + NAD(+). It catalyses the reaction N,N-dimethyl-1,4-phenylenediamine + anthranilate + 2 NAD(+) = 2-(4-dimethylaminophenyl)diazenylbenzoate + 2 NADH + 2 H(+). Functionally, quinone reductase that provides resistance to thiol-specific stress caused by electrophilic quinones. Also exhibits azoreductase activity. Catalyzes the reductive cleavage of the azo bond in aromatic azo compounds to the corresponding amines. This chain is FMN-dependent NADH:quinone oxidoreductase, found in Xanthomonas oryzae pv. oryzae (strain MAFF 311018).